The sequence spans 985 residues: Eukaryotic translation initiation factor 4E transporter (985 aa).

Residues 1-24 (MDRRSMGETESGDAFLDLKKPPAS) are disordered. At serine 5 the chain carries Phosphoserine. Positions 30–36 (YTKEELL) match the YXXXXLphi motif motif. Phosphoserine occurs at positions 74, 78, 115, 120, 136, and 138. Residues 131–161 (VSSRRSGSPLEKDSDGLRLLGGRRIGSGRII) are interaction with CSDE1. The Nuclear localization signal signature appears at 195 to 211 (RREFGDSKRVFGERRRN). The tract at residues 208–230 (RRRNDSYTEEEPEWFSAGPTSQS) is disordered. The tract at residues 219 to 240 (PEWFSAGPTSQSETIELTGFDD) is interaction with DDX6. Phosphoserine occurs at positions 301, 345, 353, and 374. Residue lysine 410 forms a Glycyl lysine isopeptide (Lys-Gly) (interchain with G-Cter in SUMO2) linkage. The residue at position 417 (serine 417) is a Phosphoserine. A Nuclear export signal motif is present at residues 438–447 (VEAGLKGLKV). The interaction with LSM14A stretch occupies residues 448–490 (DQQVKNSTPFMAEHLEETLSAVTNNRQLKKDGDMTAFNKLVST). Lysine 486 is modified (N6-acetyllysine). Phosphoserine occurs at positions 513, 564, and 587. The short motif at 613 to 638 (ITAQMSQLELQQAALEGLALPHDLAV) is the Nuclear export signal element. Disordered regions lie at residues 664 to 693 (QQRV…SMLS) and 707 to 803 (ESKE…PTTP). Serine 693 is subject to Phosphoserine. An interaction with PATL1 region spans residues 695-713 (SFTPTSVIRKMYESKEKSK). Basic and acidic residues-rich tracts occupy residues 707–717 (ESKEKSKEEPA) and 725–735 (DSKEDTQKASE). A compositionally biased stretch (low complexity) spans 736–746 (ENLLSSSSVPS). Serine 752 is modified (phosphoserine). A compositionally biased stretch (polar residues) spans 754-776 (TTNSKLSALQRSSCSTPLSQANR). Phosphoserine is present on residues serine 920 and serine 951. The disordered stretch occupies residues 922-953 (QTTPQNVPSRSGLPHMHSQLEHRPSQRSSSPV). Residues 940-985 (QLEHRPSQRSSSPVGLAKWFGSDVLQQPLPSMPAKVISVDELEYRQ) are interaction with LSM14A.

Belongs to the 4E-T/EIF4E-T family. In terms of assembly, interacts (via YXXXXLphi motif) with EIF4E. Interacts (via YXXXXLphi motif) with EIF4E2. Interacts with DDX6. Interacts with CSDE1/UNR. Interacts with CNOT1; promoting association with the CCR4-NOT complex. Interacts with LSM14A; promoting EIF4ENIF1 localization to P-bodies. Interacts with PATL1. Interacts with importin beta only in the presence of importin alpha, suggesting a direct interaction with importin alpha. Interacts with APOBEC3G in an RNA-dependent manner. In terms of processing, phosphorylation by MAPK8/JNK1 and or MAPK9/JNK2 in response to oxidative stress promotes P-body assembly. Phosphorylated during meiotic maturation. As to expression, widely expressed.

Its subcellular location is the cytoplasm. The protein resides in the P-body. It localises to the nucleus. It is found in the PML body. The protein localises to the nucleus speckle. In terms of biological role, EIF4E-binding protein that regulates translation and stability of mRNAs in processing bodies (P-bodies). Plays a key role in P-bodies to coordinate the storage of translationally inactive mRNAs in the cytoplasm and prevent their degradation. Acts as a binding platform for multiple RNA-binding proteins: promotes deadenylation of mRNAs via its interaction with the CCR4-NOT complex, and blocks decapping via interaction with eIF4E (EIF4E and EIF4E2), thereby protecting deadenylated and repressed mRNAs from degradation. Component of a multiprotein complex that sequesters and represses translation of proneurogenic factors during neurogenesis. Promotes miRNA-mediated translational repression. Required for the formation of P-bodies. Involved in mRNA translational repression mediated by the miRNA effector TNRC6B by protecting TNRC6B-targeted mRNAs from decapping and subsequent decay. Also acts as a nucleoplasmic shuttling protein, which mediates the nuclear import of EIF4E and DDX6 by a piggy-back mechanism. The polypeptide is Eukaryotic translation initiation factor 4E transporter (Homo sapiens (Human)).